A 460-amino-acid chain; its full sequence is GTPase Der (460 aa).

2 consecutive EngA-type G domains span residues 3 to 167 (FTFA…PEPD) and 189 to 364 (IRVA…AVWN). GTP contacts are provided by residues 9 to 16 (GRPNVGKS), 56 to 60 (DTAGL), 119 to 122 (NKSE), 195 to 202 (GRPNAGKS), 242 to 246 (DTAGL), and 307 to 310 (NKWD). A KH-like domain is found at 365 to 449 (TRVPTAALNR…PVRIMLREKA (85 aa)).

This sequence belongs to the TRAFAC class TrmE-Era-EngA-EngB-Septin-like GTPase superfamily. EngA (Der) GTPase family. In terms of assembly, associates with the 50S ribosomal subunit.

GTPase that plays an essential role in the late steps of ribosome biogenesis. This is GTPase Der from Rhodopseudomonas palustris (strain BisB5).